Here is an 854-residue protein sequence, read N- to C-terminus: V-type proton ATPase 116 kDa subunit a 2 (854 aa).

The Cytoplasmic segment spans residues 1-393 (MGSLFRSETM…DAYGVGSYQE (393 aa)). The chain crosses the membrane as a helical span at residues 394–412 (VNPALFTIITFPFLFAVMF). Residues 413-414 (GD) lie on the Vacuolar side of the membrane. The chain crosses the membrane as a helical span at residues 415–431 (FGHGFVMFLFALLLVLN). Over 432 to 445 (ENHPRLNQSQEIMR) the chain is Cytoplasmic. Residues 446–475 (MFFNGRYILLLMGLFSVYTGLIYNDCFSKS) form a helical membrane-spanning segment. At 476-549 (VNLFGSRWNV…ATNRLTFLNS (74 aa)) the chain is on the vacuolar side. Residues 550 to 569 (FKMKMSVILGITHMTFGVIL) form a helical membrane-spanning segment. Topologically, residues 570 to 587 (GIFNHLHFRKKFNICLVS) are cytoplasmic. A helical transmembrane segment spans residues 588 to 608 (IPELLFMLCIFGYLIFMIIYK). The Vacuolar portion of the chain corresponds to 609 to 651 (WLVYSAETSRTAPSILIEFISMFLFLASDTGGLYPGQEHVQRL). Residues 652-671 (LLLITVLSVPVLFLGKPLFL) traverse the membrane as a helical segment. The Cytoplasmic segment spans residues 672 to 739 (LWLHRGRSCF…EILMTQIIHS (68 aa)). Phosphoserine is present on residues S695 and S700. Residues 740–764 (IEYCLGCISNTASYLRLWALSLAHA) form a helical membrane-spanning segment. Residues 765 to 785 (QLSEVLWAMLMHVGLRVDTAY) are Vacuolar-facing. A helical transmembrane segment spans residues 786–824 (GVLVLLPVIAFFAVLTIFILLIMEGLSAFLHAIRLHWVE). Over 825–854 (FQNKFYVGAGTKFVPFSFRLLSSKFSDDLA) the chain is Cytoplasmic.

Belongs to the V-ATPase 116 kDa subunit family. As to quaternary structure, V-ATPase is a heteromultimeric enzyme made up of two complexes: the ATP-hydrolytic V1 complex and the proton translocation V0 complex. The V1 complex consists of three catalytic AB heterodimers that form a heterohexamer, three peripheral stalks each consisting of EG heterodimers, one central rotor including subunits D and F, and the regulatory subunits C and H. The proton translocation complex V0 consists of the proton transport subunit a, a ring of proteolipid subunits c9c'', rotary subunit d, subunits e and f, and the accessory subunits ATP6AP1/Ac45 and ATP6AP2/PRR. Directly interacts with PSCD2 through its N-terminal cytosolic tail in an intra-endosomal acidification-dependent manner. Disruption of this interaction results in the inhibition of endocytosis. Interacts with SPAAR. As to expression, highly expressed in lung, kidney and spleen.

Its subcellular location is the cell membrane. It is found in the endosome membrane. Functionally, subunit of the V0 complex of vacuolar(H+)-ATPase (V-ATPase), a multisubunit enzyme composed of a peripheral complex (V1) that hydrolyzes ATP and a membrane integral complex (V0) that translocates protons. V-ATPase is responsible for acidifying and maintaining the pH of intracellular compartments and in some cell types, is targeted to the plasma membrane, where it is responsible for acidifying the extracellular environment. Essential component of the endosomal pH-sensing machinery. May play a role in maintaining the Golgi functions, such as glycosylation maturation, by controlling the Golgi pH. In aerobic conditions, involved in intracellular iron homeostasis, thus triggering the activity of Fe(2+) prolyl hydroxylase (PHD) enzymes, and leading to HIF1A hydroxylation and subsequent proteasomal degradation. In Bos taurus (Bovine), this protein is V-type proton ATPase 116 kDa subunit a 2 (ATP6V0A2).